Here is a 411-residue protein sequence, read N- to C-terminus: Glutamate dehydrogenase 1 (411 aa).

K102 is a catalytic residue.

Belongs to the Glu/Leu/Phe/Val dehydrogenases family.

The catalysed reaction is L-glutamate + NAD(+) + H2O = 2-oxoglutarate + NH4(+) + NADH + H(+). It carries out the reaction L-glutamate + NADP(+) + H2O = 2-oxoglutarate + NH4(+) + NADPH + H(+). The sequence is that of Glutamate dehydrogenase 1 (GDH1) from Arabidopsis thaliana (Mouse-ear cress).